The chain runs to 340 residues: Ferrochelatase (340 aa).

Fe cation contacts are provided by His-218 and Glu-298.

It belongs to the ferrochelatase family.

The protein localises to the cytoplasm. The catalysed reaction is heme b + 2 H(+) = protoporphyrin IX + Fe(2+). It participates in porphyrin-containing compound metabolism; protoheme biosynthesis; protoheme from protoporphyrin-IX: step 1/1. Functionally, catalyzes the ferrous insertion into protoporphyrin IX. The chain is Ferrochelatase from Wolbachia sp. subsp. Brugia malayi (strain TRS).